The chain runs to 229 residues: Cytidylate kinase (229 aa).

12–20 is an ATP binding site; the sequence is GPSGVGKST.

This sequence belongs to the cytidylate kinase family. Type 1 subfamily.

The protein localises to the cytoplasm. The catalysed reaction is CMP + ATP = CDP + ADP. The enzyme catalyses dCMP + ATP = dCDP + ADP. This chain is Cytidylate kinase, found in Mesomycoplasma hyopneumoniae (strain 7448) (Mycoplasma hyopneumoniae).